The chain runs to 664 residues: Glycine--tRNA ligase beta subunit (664 aa).

It belongs to the class-II aminoacyl-tRNA synthetase family. In terms of assembly, tetramer of two alpha and two beta subunits.

It localises to the cytoplasm. The enzyme catalyses tRNA(Gly) + glycine + ATP = glycyl-tRNA(Gly) + AMP + diphosphate. The protein is Glycine--tRNA ligase beta subunit of Rickettsia africae (strain ESF-5).